The sequence spans 704 residues: Elongation factor G (704 aa).

Residues 8 to 290 (ARYRNIGISA…AVIDYLPSPV (283 aa)) enclose the tr-type G domain. GTP-binding positions include 17 to 24 (AHIDAGKT), 88 to 92 (DTPGH), and 142 to 145 (NKMD). N6-acetyllysine occurs at positions 504 and 643.

This sequence belongs to the TRAFAC class translation factor GTPase superfamily. Classic translation factor GTPase family. EF-G/EF-2 subfamily.

Its subcellular location is the cytoplasm. In terms of biological role, catalyzes the GTP-dependent ribosomal translocation step during translation elongation. During this step, the ribosome changes from the pre-translocational (PRE) to the post-translocational (POST) state as the newly formed A-site-bound peptidyl-tRNA and P-site-bound deacylated tRNA move to the P and E sites, respectively. Catalyzes the coordinated movement of the two tRNA molecules, the mRNA and conformational changes in the ribosome. The protein is Elongation factor G of Shigella flexneri.